A 710-amino-acid chain; its full sequence is Pentatricopeptide repeat-containing protein At5g39680 (710 aa).

Ser-2 carries the N-acetylserine modification. PPR repeat units follow at residues 35 to 64 (NELLKVCANSSYLRIGESIHAHLIVTNQSS), 68 to 98 (DAYQINSLINLYVKCRETVRARKLFDLMPER), 99 to 133 (NVVSWCAMMKGYQNSGFDFEVLKLFKSMFFSGESR), 135 to 169 (NEFVATVVFKSCSNSGRIEEGKQFHGCFLKYGLIS), 170 to 200 (HEFVRNTLVYMYSLCSGNGEAIRVLDDLPYC), 201 to 235 (DLSVFSSALSGYLECGAFKEGLDVLRKTANEDFVW), 236 to 270 (NNLTYLSSLRLFSNLRDLNLALQVHSRMVRFGFNA), 271 to 301 (EVEACGALINMYGKCGKVLYAQRVFDDTHAQ), 302 to 336 (NIFLNTTIMDAYFQDKSFEEALNLFSKMDTKEVPP), 337 to 371 (NEYTFAILLNSIAELSLLKQGDLLHGLVLKSGYRN), 372 to 402 (HVMVGNALVNMYAKSGSIEDARKAFSGMTFR), 403 to 437 (DIVTWNTMISGCSHHGLGREALEAFDRMIFTGEIP), 438 to 473 (NRITFIGVLQACSHIGFVEQGLHYFNQLMKKFDVQP), and 474 to 504 (DIQHYTCIVGLLSKAGMFKDAEDFMRTAPIE). Positions 509-584 (AWRTLLNACY…EPGVSWIGIR (76 aa)) are type E motif. Positions 585 to 615 (NQTHVFLAEDNQHPEITLIYAKVKEVMSKIK) are type E(+) motif. The segment at 616–710 (PLGYSPDVAG…DGQCSCCDYW (95 aa)) is type DYW motif.

This sequence belongs to the PPR family. PCMP-H subfamily.

The chain is Pentatricopeptide repeat-containing protein At5g39680 (EMB2744) from Arabidopsis thaliana (Mouse-ear cress).